The primary structure comprises 235 residues: Hydroxyacylglutathione hydrolase (235 aa).

The Zn(2+) site is built by histidine 53, histidine 55, aspartate 57, histidine 58, histidine 109, aspartate 127, and histidine 165.

This sequence belongs to the metallo-beta-lactamase superfamily. Glyoxalase II family. Monomer. Requires Zn(2+) as cofactor.

The enzyme catalyses an S-(2-hydroxyacyl)glutathione + H2O = a 2-hydroxy carboxylate + glutathione + H(+). The protein operates within secondary metabolite metabolism; methylglyoxal degradation; (R)-lactate from methylglyoxal: step 2/2. Thiolesterase that catalyzes the hydrolysis of S-D-lactoyl-glutathione to form glutathione and D-lactic acid. The protein is Hydroxyacylglutathione hydrolase of Haemophilus ducreyi (strain 35000HP / ATCC 700724).